The following is a 1070-amino-acid chain: Carbamoyl phosphate synthase large chain (1070 aa).

Residues 1–401 (MPKRDDIKTI…ALLKAVRSLE (401 aa)) form a carboxyphosphate synthetic domain region. Residues Arg-129, Arg-169, Gly-175, Gly-176, Lys-208, Ile-210, Glu-215, Gly-241, Ile-242, His-243, Gln-284, and Glu-298 each contribute to the ATP site. The region spanning 133 to 327 (RDLMNELGEP…IAKLAAKIAV (195 aa)) is the ATP-grasp 1 domain. The Mg(2+) site is built by Gln-284, Glu-298, and Asn-300. 3 residues coordinate Mn(2+): Gln-284, Glu-298, and Asn-300. Residues 402–546 (IGADHLLLEE…YSTYEEENES (145 aa)) form an oligomerization domain region. Residues 547–929 (TRSAKESVIV…ALYKGFVASG (383 aa)) form a carbamoyl phosphate synthetic domain region. The ATP-grasp 2 domain maps to 671–861 (EKALEILQIP…MANVATRVIL (191 aa)). Positions 707, 746, 748, 752, 777, 778, 779, 780, 820, and 832 each coordinate ATP. Mg(2+) contacts are provided by Gln-820, Glu-832, and Asn-834. Residues Gln-820, Glu-832, and Asn-834 each coordinate Mn(2+). Residues 930 to 1070 (TTMHDYGTVL…SEVKQPKARV (141 aa)) form the MGS-like domain. The tract at residues 930–1070 (TTMHDYGTVL…SEVKQPKARV (141 aa)) is allosteric domain.

This sequence belongs to the CarB family. Composed of two chains; the small (or glutamine) chain promotes the hydrolysis of glutamine to ammonia, which is used by the large (or ammonia) chain to synthesize carbamoyl phosphate. Tetramer of heterodimers (alpha,beta)4. The cofactor is Mg(2+). Mn(2+) is required as a cofactor.

It carries out the reaction hydrogencarbonate + L-glutamine + 2 ATP + H2O = carbamoyl phosphate + L-glutamate + 2 ADP + phosphate + 2 H(+). The enzyme catalyses hydrogencarbonate + NH4(+) + 2 ATP = carbamoyl phosphate + 2 ADP + phosphate + 2 H(+). Its pathway is amino-acid biosynthesis; L-arginine biosynthesis; carbamoyl phosphate from bicarbonate: step 1/1. The protein operates within pyrimidine metabolism; UMP biosynthesis via de novo pathway; (S)-dihydroorotate from bicarbonate: step 1/3. In terms of biological role, large subunit of the glutamine-dependent carbamoyl phosphate synthetase (CPSase). CPSase catalyzes the formation of carbamoyl phosphate from the ammonia moiety of glutamine, carbonate, and phosphate donated by ATP, constituting the first step of 2 biosynthetic pathways, one leading to arginine and/or urea and the other to pyrimidine nucleotides. The large subunit (synthetase) binds the substrates ammonia (free or transferred from glutamine from the small subunit), hydrogencarbonate and ATP and carries out an ATP-coupled ligase reaction, activating hydrogencarbonate by forming carboxy phosphate which reacts with ammonia to form carbamoyl phosphate. The sequence is that of Carbamoyl phosphate synthase large chain from Listeria monocytogenes serotype 4b (strain F2365).